The following is a 250-amino-acid chain: 5-oxoprolinase subunit A (250 aa).

The protein belongs to the LamB/PxpA family. Forms a complex composed of PxpA, PxpB and PxpC.

It carries out the reaction 5-oxo-L-proline + ATP + 2 H2O = L-glutamate + ADP + phosphate + H(+). Functionally, catalyzes the cleavage of 5-oxoproline to form L-glutamate coupled to the hydrolysis of ATP to ADP and inorganic phosphate. The protein is 5-oxoprolinase subunit A of Paraburkholderia phytofirmans (strain DSM 17436 / LMG 22146 / PsJN) (Burkholderia phytofirmans).